The primary structure comprises 305 residues: Putative monooxygenase p33MONOX (305 aa).

The segment at Leu-37–Lys-56 is disordered. Thr-44 is subject to Phosphothreonine. A Flavin-containing monooxygenase motif motif is present at residues Leu-67–Leu-77. Disordered regions lie at residues Gln-158–Ser-236 and Gln-259–Phe-305. Positions Pro-169–Ser-183 are enriched in low complexity. Thr-175 bears the Phosphothreonine mark. Phosphoserine is present on residues Ser-182 and Ser-183. Over residues Thr-193–Ser-210 the composition is skewed to polar residues.

It belongs to the P33MONOX family. Interacts with NELFB, NOL12 and PRNP. In terms of tissue distribution, down-regulated in the occipital lobe of an early stage Alzheimer disease patients.

It is found in the cytoplasm. In terms of biological role, potential NADPH-dependent oxidoreductase. May be involved in the regulation of neuronal survival, differentiation and axonal outgrowth. This chain is Putative monooxygenase p33MONOX (KIAA1191), found in Homo sapiens (Human).